Here is a 432-residue protein sequence, read N- to C-terminus: MPSNVPAAPITTAEVLPADELERILEAARTASTSLAASTSVQRDAALDAIAAALVSGADRIVAANAEDLAAGRDAGLAAGLLDRLTLDARRVASLADAVTGIRGLDDPLGLVVRGRTLPNGLLLSQVRVPFGVVGAIYEARPNVTVDIAALALKSGNAVVLRGGSAALRTNAVLVDVMRGALERVGLLAHAVQTVDAHGRAGAARLMRARGLVDVLVPRGSAELIRTVVAESTVPVIETGAGVVHVYLDASADARMSVDIAVDAKVSRPSVCNAMETLLVHRDAAPRVLVAVLDALRDRGVTVHGDAAVRAMWPDAVPATDEDWAAEYLSLDLAVRVVDSVEDAVAHIARWSTHHTESIVTSDLAVAERFLAAVDSAVVMVNASTRFTDGSEFGFGAEVGISTQKLHARGPMGVQELTSTKWIVRGSGQVRG.

Belongs to the gamma-glutamyl phosphate reductase family.

The protein localises to the cytoplasm. It carries out the reaction L-glutamate 5-semialdehyde + phosphate + NADP(+) = L-glutamyl 5-phosphate + NADPH + H(+). Its pathway is amino-acid biosynthesis; L-proline biosynthesis; L-glutamate 5-semialdehyde from L-glutamate: step 2/2. Its function is as follows. Catalyzes the NADPH-dependent reduction of L-glutamate 5-phosphate into L-glutamate 5-semialdehyde and phosphate. The product spontaneously undergoes cyclization to form 1-pyrroline-5-carboxylate. The chain is Gamma-glutamyl phosphate reductase from Clavibacter michiganensis subsp. michiganensis (strain NCPPB 382).